The following is a 254-amino-acid chain: Acetylglutamate kinase (254 aa).

Residues 40–41, Arg62, and Asn154 contribute to the substrate site; that span reads GG. ATP contacts are provided by residues 177 to 182 and 205 to 207; these read DVSGIL and IIT.

This sequence belongs to the acetylglutamate kinase family. ArgB subfamily. In terms of assembly, homodimer.

Its subcellular location is the cytoplasm. The catalysed reaction is N-acetyl-L-glutamate + ATP = N-acetyl-L-glutamyl 5-phosphate + ADP. Its pathway is amino-acid biosynthesis; L-arginine biosynthesis; N(2)-acetyl-L-ornithine from L-glutamate: step 2/4. Its function is as follows. Catalyzes the ATP-dependent phosphorylation of N-acetyl-L-glutamate. The protein is Acetylglutamate kinase of Yersinia enterocolitica serotype O:8 / biotype 1B (strain NCTC 13174 / 8081).